Consider the following 286-residue polypeptide: NAD kinase (286 aa).

Asp-68 functions as the Proton acceptor in the catalytic mechanism. Residues 68 to 69 (DG), Lys-73, 142 to 143 (ND), Arg-153, Asp-172, 183 to 188 (TGYSFS), and Gln-242 contribute to the NAD(+) site.

Belongs to the NAD kinase family. It depends on a divalent metal cation as a cofactor.

The protein resides in the cytoplasm. It catalyses the reaction NAD(+) + ATP = ADP + NADP(+) + H(+). Involved in the regulation of the intracellular balance of NAD and NADP, and is a key enzyme in the biosynthesis of NADP. Catalyzes specifically the phosphorylation on 2'-hydroxyl of the adenosine moiety of NAD to yield NADP. In Natranaerobius thermophilus (strain ATCC BAA-1301 / DSM 18059 / JW/NM-WN-LF), this protein is NAD kinase.